Consider the following 360-residue polypeptide: NAD(P)H-quinone oxidoreductase subunit 1, chloroplastic (360 aa).

The next 8 helical transmembrane spans lie at 27–47, 98–118, 129–149, 165–185, 203–223, 253–273, 297–317, and 340–360; these read IWIFVPIFSLVLGIITGVLVI, FSIGPSIAVISILLSYSVIPF, IGIFLWIAISSIAPIGLLMSG, AAQSISYEIPLTLCVLSISLL, FWGWNLWRQPIGFIIFLISSL, FGLFYVASYLNLLISSLFVTV, IFGTTIGIFITLAKTYLFLFV, and FLLPISLGNLLLTTSFQLFSL.

This sequence belongs to the complex I subunit 1 family. NDH is composed of at least 16 different subunits, 5 of which are encoded in the nucleus.

The protein resides in the plastid. Its subcellular location is the chloroplast thylakoid membrane. It carries out the reaction a plastoquinone + NADH + (n+1) H(+)(in) = a plastoquinol + NAD(+) + n H(+)(out). The catalysed reaction is a plastoquinone + NADPH + (n+1) H(+)(in) = a plastoquinol + NADP(+) + n H(+)(out). Its function is as follows. NDH shuttles electrons from NAD(P)H:plastoquinone, via FMN and iron-sulfur (Fe-S) centers, to quinones in the photosynthetic chain and possibly in a chloroplast respiratory chain. The immediate electron acceptor for the enzyme in this species is believed to be plastoquinone. Couples the redox reaction to proton translocation, and thus conserves the redox energy in a proton gradient. This Arabidopsis thaliana (Mouse-ear cress) protein is NAD(P)H-quinone oxidoreductase subunit 1, chloroplastic.